The primary structure comprises 211 residues: tRNA (guanine-N(7)-)-methyltransferase (211 aa).

S-adenosyl-L-methionine-binding residues include Glu-43, Asp-68, Asn-95, and Asn-117. Residues Lys-121, Asp-153, and 190-193 (TEYE) contribute to the substrate site.

Belongs to the class I-like SAM-binding methyltransferase superfamily. TrmB family.

The enzyme catalyses guanosine(46) in tRNA + S-adenosyl-L-methionine = N(7)-methylguanosine(46) in tRNA + S-adenosyl-L-homocysteine. Its pathway is tRNA modification; N(7)-methylguanine-tRNA biosynthesis. Its function is as follows. Catalyzes the formation of N(7)-methylguanine at position 46 (m7G46) in tRNA. This Clostridium kluyveri (strain ATCC 8527 / DSM 555 / NBRC 12016 / NCIMB 10680 / K1) protein is tRNA (guanine-N(7)-)-methyltransferase.